The primary structure comprises 324 residues: Beta-ketoacyl-[acyl-carrier-protein] synthase III (324 aa).

Residues Cys-114 and His-251 contribute to the active site. Positions 252-256 (QANLR) are ACP-binding. Asn-281 is a catalytic residue.

This sequence belongs to the thiolase-like superfamily. FabH family. In terms of assembly, homodimer.

The protein resides in the cytoplasm. The catalysed reaction is malonyl-[ACP] + acetyl-CoA + H(+) = 3-oxobutanoyl-[ACP] + CO2 + CoA. It functions in the pathway lipid metabolism; fatty acid biosynthesis. Catalyzes the condensation reaction of fatty acid synthesis by the addition to an acyl acceptor of two carbons from malonyl-ACP. Catalyzes the first condensation reaction which initiates fatty acid synthesis and may therefore play a role in governing the total rate of fatty acid production. Possesses both acetoacetyl-ACP synthase and acetyl transacylase activities. Its substrate specificity determines the biosynthesis of branched-chain and/or straight-chain of fatty acids. The chain is Beta-ketoacyl-[acyl-carrier-protein] synthase III from Dinoroseobacter shibae (strain DSM 16493 / NCIMB 14021 / DFL 12).